The sequence spans 89 residues: UPF0147 protein YN1551_1489 (89 aa).

This sequence belongs to the UPF0147 family.

This is UPF0147 protein YN1551_1489 from Saccharolobus islandicus (strain Y.N.15.51 / Yellowstone #2) (Sulfolobus islandicus).